The chain runs to 261 residues: 3-deoxy-manno-octulosonate cytidylyltransferase (261 aa).

The protein belongs to the KdsB family.

Its subcellular location is the cytoplasm. The catalysed reaction is 3-deoxy-alpha-D-manno-oct-2-ulosonate + CTP = CMP-3-deoxy-beta-D-manno-octulosonate + diphosphate. Its pathway is nucleotide-sugar biosynthesis; CMP-3-deoxy-D-manno-octulosonate biosynthesis; CMP-3-deoxy-D-manno-octulosonate from 3-deoxy-D-manno-octulosonate and CTP: step 1/1. It functions in the pathway bacterial outer membrane biogenesis; lipopolysaccharide biosynthesis. In terms of biological role, activates KDO (a required 8-carbon sugar) for incorporation into bacterial lipopolysaccharide in Gram-negative bacteria. The chain is 3-deoxy-manno-octulosonate cytidylyltransferase from Dechloromonas aromatica (strain RCB).